Here is a 493-residue protein sequence, read N- to C-terminus: Endothelial lipase (493 aa).

Positions 1-23 (MRDPVFLLGFWSLYCCFPAGSLT) are cleaved as a signal peptide. Cys66 and Cys79 are disulfide-bonded. Residues Asn67 and Asn82 are each glycosylated (N-linked (GlcNAc...) asparagine). Ser171 (nucleophile) is an active-site residue. Asp195 acts as the Charge relay system in catalysis. A disulfide bond links Cys254 and Cys274. His276 (charge relay system) is an active-site residue. 2 cysteine pairs are disulfide-bonded: Cys299-Cys318 and Cys310-Cys313. 327–339 (KMRKKRNSKMYLK) contacts heparin. The PLAT domain occupies 349–484 (YHYQLKVHMF…SPGQELWFYK (136 aa)). Asn395 is a glycosylation site (N-linked (GlcNAc...) asparagine). A disulfide bond links Cys465 and Cys485.

The protein belongs to the AB hydrolase superfamily. Lipase family. In terms of assembly, head to tail Homodimer. Interacts with apolipoprotein C-2.

It is found in the secreted. It carries out the reaction a triacylglycerol + H2O = a diacylglycerol + a fatty acid + H(+). It catalyses the reaction a 1,2-diacyl-sn-glycero-3-phosphocholine + H2O = a 2-acyl-sn-glycero-3-phosphocholine + a fatty acid + H(+). The enzyme catalyses 1,2,3-tri-(9Z-octadecenoyl)-glycerol + H2O = di-(9Z)-octadecenoylglycerol + (9Z)-octadecenoate + H(+). The catalysed reaction is 1,2,3-tributanoylglycerol + H2O = dibutanoylglycerol + butanoate + H(+). It carries out the reaction 1,2-dihexadecanoyl-sn-glycero-3-phosphocholine + H2O = hexadecanoyl-sn-glycero-3-phosphocholine + hexadecanoate + H(+). Its function is as follows. Exerts both phospholipase and triglyceride lipase activities. More active as a phospholipase than a triglyceride lipase. Hydrolyzes triglycerides, both with short-chain fatty acyl groups (tributyrin) and long-chain fatty acyl groups (triolein) with similar levels of activity toward both types of substrates. Hydrolyzes high density lipoproteins (HDL) more efficiently than other lipoproteins. The sequence is that of Endothelial lipase (Lipg) from Rattus norvegicus (Rat).